We begin with the raw amino-acid sequence, 377 residues long: Ribosomal RNA large subunit methyltransferase G (377 aa).

The protein belongs to the methyltransferase superfamily. RlmG family.

The protein localises to the cytoplasm. The catalysed reaction is guanosine(1835) in 23S rRNA + S-adenosyl-L-methionine = N(2)-methylguanosine(1835) in 23S rRNA + S-adenosyl-L-homocysteine + H(+). Its function is as follows. Specifically methylates the guanine in position 1835 (m2G1835) of 23S rRNA. The polypeptide is Ribosomal RNA large subunit methyltransferase G (Shewanella oneidensis (strain ATCC 700550 / JCM 31522 / CIP 106686 / LMG 19005 / NCIMB 14063 / MR-1)).